Consider the following 150-residue polypeptide: D-aminoacyl-tRNA deacylase (150 aa).

The short motif at 138–139 (GP) is the Gly-cisPro motif, important for rejection of L-amino acids element.

Belongs to the DTD family. Homodimer.

The protein resides in the cytoplasm. The enzyme catalyses glycyl-tRNA(Ala) + H2O = tRNA(Ala) + glycine + H(+). The catalysed reaction is a D-aminoacyl-tRNA + H2O = a tRNA + a D-alpha-amino acid + H(+). Its function is as follows. An aminoacyl-tRNA editing enzyme that deacylates mischarged D-aminoacyl-tRNAs. Also deacylates mischarged glycyl-tRNA(Ala), protecting cells against glycine mischarging by AlaRS. Acts via tRNA-based rather than protein-based catalysis; rejects L-amino acids rather than detecting D-amino acids in the active site. By recycling D-aminoacyl-tRNA to D-amino acids and free tRNA molecules, this enzyme counteracts the toxicity associated with the formation of D-aminoacyl-tRNA entities in vivo and helps enforce protein L-homochirality. The chain is D-aminoacyl-tRNA deacylase from Petrotoga mobilis (strain DSM 10674 / SJ95).